We begin with the raw amino-acid sequence, 446 residues long: Tubulin beta-2 chain (446 aa).

Residues Gln-11, Glu-69, Ser-138, Gly-142, Thr-143, Gly-144, Asn-204, and Asn-226 each coordinate GTP. Glu-69 provides a ligand contact to Mg(2+). The interval 424–446 is disordered; it reads QYQEATADEEGEFDEDEEGGGDE. Positions 429-446 are enriched in acidic residues; that stretch reads TADEEGEFDEDEEGGGDE.

Belongs to the tubulin family. As to quaternary structure, dimer of alpha and beta chains. A typical microtubule is a hollow water-filled tube with an outer diameter of 25 nm and an inner diameter of 15 nM. Alpha-beta heterodimers associate head-to-tail to form protofilaments running lengthwise along the microtubule wall with the beta-tubulin subunit facing the microtubule plus end conferring a structural polarity. Microtubules usually have 13 protofilaments but different protofilament numbers can be found in some organisms and specialized cells. Requires Mg(2+) as cofactor. Testis specific.

Its subcellular location is the cytoplasm. It is found in the cytoskeleton. Its function is as follows. Tubulin is the major constituent of microtubules, a cylinder consisting of laterally associated linear protofilaments composed of alpha- and beta-tubulin heterodimers. Microtubules grow by the addition of GTP-tubulin dimers to the microtubule end, where a stabilizing cap forms. Below the cap, tubulin dimers are in GDP-bound state, owing to GTPase activity of alpha-tubulin. The sequence is that of Tubulin beta-2 chain (betaTub85D) from Drosophila melanogaster (Fruit fly).